A 428-amino-acid chain; its full sequence is Protein ECERIFERUM 26 (428 aa).

Residues Met1–Pro36 form a disordered region. The segment covering Thr21–Pro36 has biased composition (low complexity).

Belongs to the plant acyltransferase family. Highly expressed in leaves.

It is found in the cytoplasm. It localises to the cytosol. In terms of biological role, involved in biosynthesis of the epicuticular wax. Plays a role in very-long-chain fatty acid (VLCFA) biosynthesis and is required for C30 fatty acid elongation in leaf. Despite its classification as a BAHD acyltransferase based on sequence homology, CER26 does not seem to share the catalytic mechanism of the members of the BAHD family. This is Protein ECERIFERUM 26 (CER26) from Arabidopsis thaliana (Mouse-ear cress).